A 483-amino-acid chain; its full sequence is Regulatory protein ViaA (483 aa).

The protein belongs to the ViaA family. Homodimer. Interacts with RavA.

The protein localises to the cytoplasm. Its function is as follows. Component of the RavA-ViaA chaperone complex, which may act on the membrane to optimize the function of some of the respiratory chains. ViaA stimulates the ATPase activity of RavA. This Salmonella arizonae (strain ATCC BAA-731 / CDC346-86 / RSK2980) protein is Regulatory protein ViaA.